Reading from the N-terminus, the 220-residue chain is uncharacterized protein (220 aa).

7 helical membrane-spanning segments follow: residues 6-26 (FSIL…LIVW), 33-53 (IVRL…LRGI), 59-79 (ALIA…PWLL), 103-123 (LLIT…VVNL), 126-146 (GVTI…LFVM), 157-177 (AGFL…TAGV), and 179-199 (LIVE…IGVL).

The protein localises to the cell membrane. This is an uncharacterized protein from Mycobacterium tuberculosis (strain ATCC 25618 / H37Rv).